We begin with the raw amino-acid sequence, 321 residues long: Lipoyl synthase (321 aa).

Residues Cys-68, Cys-73, Cys-79, Cys-94, Cys-98, Cys-101, and Ser-308 each contribute to the [4Fe-4S] cluster site. Positions 80–297 (FNHGTATFMI…KAEAMAMGFT (218 aa)) constitute a Radical SAM core domain.

It belongs to the radical SAM superfamily. Lipoyl synthase family. [4Fe-4S] cluster is required as a cofactor.

Its subcellular location is the cytoplasm. The catalysed reaction is [[Fe-S] cluster scaffold protein carrying a second [4Fe-4S](2+) cluster] + N(6)-octanoyl-L-lysyl-[protein] + 2 oxidized [2Fe-2S]-[ferredoxin] + 2 S-adenosyl-L-methionine + 4 H(+) = [[Fe-S] cluster scaffold protein] + N(6)-[(R)-dihydrolipoyl]-L-lysyl-[protein] + 4 Fe(3+) + 2 hydrogen sulfide + 2 5'-deoxyadenosine + 2 L-methionine + 2 reduced [2Fe-2S]-[ferredoxin]. It participates in protein modification; protein lipoylation via endogenous pathway; protein N(6)-(lipoyl)lysine from octanoyl-[acyl-carrier-protein]: step 2/2. In terms of biological role, catalyzes the radical-mediated insertion of two sulfur atoms into the C-6 and C-8 positions of the octanoyl moiety bound to the lipoyl domains of lipoate-dependent enzymes, thereby converting the octanoylated domains into lipoylated derivatives. This Yersinia pseudotuberculosis serotype O:1b (strain IP 31758) protein is Lipoyl synthase.